A 310-amino-acid chain; its full sequence is Thioredoxin reductase (310 aa).

34–41 contributes to the FAD binding site; sequence NGIQPGGQ. The cysteines at positions 135 and 138 are disulfide-linked. 281–290 provides a ligand contact to FAD; that stretch reads DVQDKIYRQA.

The protein belongs to the class-II pyridine nucleotide-disulfide oxidoreductase family. Homodimer. Requires FAD as cofactor.

It localises to the cytoplasm. It catalyses the reaction [thioredoxin]-dithiol + NADP(+) = [thioredoxin]-disulfide + NADPH + H(+). This Rickettsia bellii (strain RML369-C) protein is Thioredoxin reductase (trxB).